The chain runs to 229 residues: Orotate phosphoribosyltransferase (229 aa).

5-phospho-alpha-D-ribose 1-diphosphate is bound by residues R107, K108, K111, H113, and 133 to 141 (EDLTTAGGS). T137 provides a ligand contact to orotate.

It belongs to the purine/pyrimidine phosphoribosyltransferase family. PyrE subfamily. In terms of assembly, homodimer. Requires Mg(2+) as cofactor.

The enzyme catalyses orotidine 5'-phosphate + diphosphate = orotate + 5-phospho-alpha-D-ribose 1-diphosphate. It participates in pyrimidine metabolism; UMP biosynthesis via de novo pathway; UMP from orotate: step 1/2. Its function is as follows. Catalyzes the transfer of a ribosyl phosphate group from 5-phosphoribose 1-diphosphate to orotate, leading to the formation of orotidine monophosphate (OMP). In Rhizobium etli (strain CIAT 652), this protein is Orotate phosphoribosyltransferase.